We begin with the raw amino-acid sequence, 363 residues long: MSGNTYGKLFTVTTAGESHGPALVAIVDGCPPGLEISLADLQHDLDRRKPGTSRHTTQRQEPDEVEILSGVFEGRTTGCSIGLLIRNTDQKSKDYSAIKDLFRPAHADYTYHHKYGIRDYRGGGRSSARETAMRVAAGAIAKKYLATQGIQVRGYMSQLGPIEIPFKTWDSVQDNAFFSPDPDKVPELEAYMDQLRRDQDSVGAKITVVAEGVMPGLGEPIFDRLDAELAHALMSINAVKGVEIGAGFASIAQRGTEHRDELTPEGFLSNNAGGILGGISSGQPIVAHLALKPTSSITVPGRSIDVDGNPVDVITKGRHDPCVGIRATPIAEAMMAIVLMDHLLRHRAQNAEVKVATPVLGQL.

NADP(+)-binding residues include R48 and R54. FMN is bound by residues 125–127, 237–238, G277, 292–296, and R318; these read RSS, NA, and KPTSS.

It belongs to the chorismate synthase family. Homotetramer. Requires FMNH2 as cofactor.

It carries out the reaction 5-O-(1-carboxyvinyl)-3-phosphoshikimate = chorismate + phosphate. The protein operates within metabolic intermediate biosynthesis; chorismate biosynthesis; chorismate from D-erythrose 4-phosphate and phosphoenolpyruvate: step 7/7. Its function is as follows. Catalyzes the anti-1,4-elimination of the C-3 phosphate and the C-6 proR hydrogen from 5-enolpyruvylshikimate-3-phosphate (EPSP) to yield chorismate, which is the branch point compound that serves as the starting substrate for the three terminal pathways of aromatic amino acid biosynthesis. This reaction introduces a second double bond into the aromatic ring system. The chain is Chorismate synthase from Pseudomonas putida (strain W619).